Here is a 730-residue protein sequence, read N- to C-terminus: Protein folded gastrulation (730 aa).

A signal peptide spans 1 to 21 (MSPPNCLLAVLALTVFIGANN). N-linked (GlcNAc...) asparagine glycosylation is found at asparagine 51 and asparagine 193. The segment covering 197–211 (TPETSTSITPTSTTT) has biased composition (low complexity). The segment at 197 to 222 (TPETSTSITPTSTTTFAVPSVPSGEA) is disordered. 2 N-linked (GlcNAc...) asparagine glycosylation sites follow: asparagine 252 and asparagine 289. Residues 361–385 (ELEEEVGEEEVTATDILPSEEDEYT) are compositionally biased toward acidic residues. Residues 361 to 424 (ELEEEVGEEE…SPHPPEEPEI (64 aa)) are disordered. The span at 386–415 (TETATTTGDTTVAEASMDTSTATSTSGQSS) shows a compositional bias: low complexity. N-linked (GlcNAc...) asparagine glycosylation occurs at asparagine 459. Disordered stretches follow at residues 474-526 (EDES…GGHK) and 545-583 (KGKQRQQHQPQKQQLEPTSTEITSALTSTSTEDATTTTT). A compositionally biased stretch (low complexity) spans 478 to 491 (STTTATPEPSSSTP). The segment covering 504–513 (DNDNLMTNTI) has biased composition (polar residues). Residues 567–583 (TSALTSTSTEDATTTTT) show a composition bias toward low complexity. Residues asparagine 590 and asparagine 639 are each glycosylated (N-linked (GlcNAc...) asparagine). A compositionally biased stretch (low complexity) spans 663-676 (SAASTESAGTAATT). Residues 663–683 (SAASTESAGTAATTPNSSSNP) form a disordered region. A glycan (N-linked (GlcNAc...) asparagine) is linked at asparagine 678.

May be highly O-glycosylated in its Ser/Thr-rich C-terminal part. In terms of tissue distribution, expressed in the invagination primordia in a pattern that precisely precedes the pattern of constrictions.

The protein localises to the secreted. Its subcellular location is the extracellular space. It localises to the extracellular matrix. In terms of biological role, coordinates cell shape changes during formation of the ventral furrow and invagination of the posterior midgut primordium, by inducing apical constriction of cells in spatially and temporally defined manners. Could function as a secreted signal to initiate apical constriction by acting as a ligand for an unidentified G protein-coupled receptor, which in turn activates the G protein alpha subunit encoded by concertina, in neighboring cells. Such an intracellular pathway would ultimately induce contraction of the apical actin-myosin network. In the ventral furrow, fog appears to ensure that all the cells initiate constriction within several minutes of each other. In the posterior midgut invagination, fog appears to direct the ordered progression of constriction initiations out from a central region and also to delimit the peripheral extent of this spreading. This chain is Protein folded gastrulation (fog), found in Drosophila melanogaster (Fruit fly).